A 205-amino-acid polypeptide reads, in one-letter code: Outer-membrane lipoprotein carrier protein (205 aa).

Residues 1 to 22 (MKKTTLKFAALTLLGLSNLALA) form the signal peptide.

This sequence belongs to the LolA family. As to quaternary structure, monomer.

The protein localises to the periplasm. Its function is as follows. Participates in the translocation of lipoproteins from the inner membrane to the outer membrane. Only forms a complex with a lipoprotein if the residue after the N-terminal Cys is not an aspartate (The Asp acts as a targeting signal to indicate that the lipoprotein should stay in the inner membrane). This is Outer-membrane lipoprotein carrier protein from Haemophilus influenzae (strain PittEE).